The following is a 221-amino-acid chain: Oxaloacetate tautomerase oaa1, mitochondrial (221 aa).

Mg(2+) is bound by residues E59, E61, and D93.

It belongs to the FAH family. Requires Mg(2+) as cofactor. Mn(2+) serves as cofactor.

It localises to the mitochondrion. Its subcellular location is the cytoplasm. The enzyme catalyses oxaloacetate = enol-oxaloacetate. Functionally, tautomerase that converts enol-oxaloacetate, a strong inhibitor of succinate dehydrogenase, to the physiological keto form of oxaloacetate. This chain is Oxaloacetate tautomerase oaa1, mitochondrial, found in Schizosaccharomyces pombe (strain 972 / ATCC 24843) (Fission yeast).